Reading from the N-terminus, the 252-residue chain is N-glycosylase/DNA lyase (252 aa).

8-oxoguanine is bound by residues Gln32, Ser60, and Trp71. The segment at 129–193 (KTYYSDMEKL…KDSRIEKYTL (65 aa)) is helix-hairpin-helix. Lys153 acts as the Schiff-base intermediate with DNA in catalysis. The 8-oxoguanine site is built by Phe157 and Pro183. Residue Asp185 is part of the active site. Residues Asp219 and Trp223 each contribute to the 8-oxoguanine site.

Belongs to the archaeal N-glycosylase/DNA lyase (AGOG) family.

It catalyses the reaction 2'-deoxyribonucleotide-(2'-deoxyribose 5'-phosphate)-2'-deoxyribonucleotide-DNA = a 3'-end 2'-deoxyribonucleotide-(2,3-dehydro-2,3-deoxyribose 5'-phosphate)-DNA + a 5'-end 5'-phospho-2'-deoxyribonucleoside-DNA + H(+). DNA repair enzyme that is part of the base excision repair (BER) pathway; protects from oxidative damage by removing the major product of DNA oxidation, 8-oxoguanine (GO), from single- and double-stranded DNA substrates. This is N-glycosylase/DNA lyase from Methanococcus maripaludis (strain DSM 14266 / JCM 13030 / NBRC 101832 / S2 / LL).